The primary structure comprises 403 residues: Metacaspase-1A (403 aa).

The segment at Met-1 to His-93 is disordered. Positions Gly-18–Pro-31 are enriched in low complexity. The segment covering Ser-32–Ser-55 has biased composition (pro residues). Catalysis depends on residues His-194 and Cys-250.

The protein belongs to the peptidase C14B family.

Involved in cell death (apoptosis). The chain is Metacaspase-1A (casA) from Aspergillus terreus (strain NIH 2624 / FGSC A1156).